The following is a 381-amino-acid chain: MPFGNTHNKYKLNFKAEEEYPDLSKHNNHMAKALTLEIYKKLRDKETPSGFTLDDVIQTGVDNPGHPFIMTVGCVAGDEESYVVFKDLFDPIIQDRHGGYKPTDKHKTDLNHENLKGGDDLDPNYVLSSRVRTGRSIKGYTLPPHCSRGERRAVEKLSVEALNSLTGEFKGKYYPLKSMTEQEQQQLIDDHFLFDKPVSPLLLASGMARDWPDARGIWHNDNKSFLVWVNEEDHLRVISMEKGGNMKEVFRRFCVGLQKIEEIFKKAGHPFMWNEHLGYVLTCPSNLGTGLRGGVHVKLAHLSKHPKFEEILTRLRLQKRGTGGVDTAAVGSVFDVSNADRLGSSEVEQVQLVVDGVKLMVEMEKKLEKGQSIDDMIPAQK.

A Phosphagen kinase N-terminal domain is found at 11 to 98; sequence KLNFKAEEEY…FDPIIQDRHG (88 aa). Residues 125–367 form the Phosphagen kinase C-terminal domain; it reads YVLSSRVRTG…KLMVEMEKKL (243 aa). 128–132 lines the ATP pocket; sequence SSRVR. At Ser164 the chain carries Phosphoserine. A Phosphothreonine modification is found at Thr166. Ser178 bears the Phosphoserine mark. Thr180 carries the post-translational modification Phosphothreonine. His191 lines the ATP pocket. Ser199 is modified (phosphoserine). ATP contacts are provided by Arg236 and Arg292. A phosphothreonine mark is found at Thr313 and Thr322. ATP contacts are provided by residues 320–325 and Asp335; that span reads RGTGGV. Ser372 is modified (phosphoserine).

Belongs to the ATP:guanido phosphotransferase family. In terms of assembly, dimer of identical or non-identical chains, which can be either B (brain type) or M (muscle type). With MM being the major form in skeletal muscle and myocardium, MB existing in myocardium, and BB existing in many tissues, especially brain.

The catalysed reaction is creatine + ATP = N-phosphocreatine + ADP + H(+). Functionally, reversibly catalyzes the transfer of phosphate between ATP and various phosphogens (e.g. creatine phosphate). Creatine kinase isoenzymes play a central role in energy transduction in tissues with large, fluctuating energy demands, such as skeletal muscle, heart, brain and spermatozoa. This chain is Creatine kinase M-type (CKM), found in Sus scrofa (Pig).